Reading from the N-terminus, the 1033-residue chain is Kinesin-like protein KIN-4A (1033 aa).

The 356-residue stretch at 11-366 folds into the Kinesin motor domain; it reads CVKVAVHVRP…LKYANRARNI (356 aa). 89-96 lines the ATP pocket; it reads GQTGSGKT. The segment at 443–462 is disordered; it reads QDGSPCSVESDGLKRNLRSR. The span at 453–462 shows a compositional bias: basic and acidic residues; that stretch reads DGLKRNLRSR. A coiled-coil region spans residues 525–638; that stretch reads ALKQHFGKKI…IKQEAEQFRQ (114 aa). The segment at 763-785 is disordered; that stretch reads DELDSKGPSPSRGKNGCARGSSL. The stretch at 863-895 forms a coiled coil; the sequence is IEIREMKEQLKELVGLLRQSELQRKEVENELKL.

It belongs to the TRAFAC class myosin-kinesin ATPase superfamily. Kinesin family. KIN-4 subfamily. In terms of assembly, homodimer. In terms of tissue distribution, expressed in cotton fibers.

The protein resides in the cytoplasm. Kinesin-like motor protein involved in the control of the oriented deposition of cellulose microfibrils. This chain is Kinesin-like protein KIN-4A, found in Gossypium hirsutum (Upland cotton).